We begin with the raw amino-acid sequence, 129 residues long: Ribosome-binding factor A (129 aa).

It belongs to the RbfA family. In terms of assembly, monomer. Binds 30S ribosomal subunits, but not 50S ribosomal subunits or 70S ribosomes.

It is found in the cytoplasm. Its function is as follows. One of several proteins that assist in the late maturation steps of the functional core of the 30S ribosomal subunit. Associates with free 30S ribosomal subunits (but not with 30S subunits that are part of 70S ribosomes or polysomes). Required for efficient processing of 16S rRNA. May interact with the 5'-terminal helix region of 16S rRNA. In Pseudomonas aeruginosa (strain UCBPP-PA14), this protein is Ribosome-binding factor A.